Here is a 363-residue protein sequence, read N- to C-terminus: UDP-N-acetylglucosamine--N-acetylmuramyl-(pentapeptide) pyrophosphoryl-undecaprenol N-acetylglucosamine transferase (363 aa).

Residues 10 to 12 (TGG), asparagine 124, serine 195, isoleucine 250, and glutamine 295 contribute to the UDP-N-acetyl-alpha-D-glucosamine site.

The protein belongs to the glycosyltransferase 28 family. MurG subfamily.

The protein localises to the cell membrane. The catalysed reaction is di-trans,octa-cis-undecaprenyl diphospho-N-acetyl-alpha-D-muramoyl-L-alanyl-D-glutamyl-meso-2,6-diaminopimeloyl-D-alanyl-D-alanine + UDP-N-acetyl-alpha-D-glucosamine = di-trans,octa-cis-undecaprenyl diphospho-[N-acetyl-alpha-D-glucosaminyl-(1-&gt;4)]-N-acetyl-alpha-D-muramoyl-L-alanyl-D-glutamyl-meso-2,6-diaminopimeloyl-D-alanyl-D-alanine + UDP + H(+). The protein operates within cell wall biogenesis; peptidoglycan biosynthesis. In terms of biological role, cell wall formation. Catalyzes the transfer of a GlcNAc subunit on undecaprenyl-pyrophosphoryl-MurNAc-pentapeptide (lipid intermediate I) to form undecaprenyl-pyrophosphoryl-MurNAc-(pentapeptide)GlcNAc (lipid intermediate II). This is UDP-N-acetylglucosamine--N-acetylmuramyl-(pentapeptide) pyrophosphoryl-undecaprenol N-acetylglucosamine transferase from Listeria monocytogenes serotype 4a (strain HCC23).